We begin with the raw amino-acid sequence, 380 residues long: uncharacterized protein (380 aa).

Residues 256 to 301 (DKEEKIQKSYQYQTELITELQGRIAELEKENQSLKENVKEPETSKP) are a coiled coil.

This is an uncharacterized protein from Pasteurella multocida (strain Pm70).